Consider the following 129-residue polypeptide: Small ribosomal subunit protein uS13 (129 aa).

Over residues 95 to 114 (NLPVRGQRTKTNARTRRGPR) the composition is skewed to basic residues. Residues 95–129 (NLPVRGQRTKTNARTRRGPRKTVAGRGQKRGATKK) form a disordered region.

Belongs to the universal ribosomal protein uS13 family. As to quaternary structure, part of the 30S ribosomal subunit. Forms a loose heterodimer with protein S19. Forms two bridges to the 50S subunit in the 70S ribosome.

Located at the top of the head of the 30S subunit, it contacts several helices of the 16S rRNA. In the 70S ribosome it contacts the 23S rRNA (bridge B1a) and protein L5 of the 50S subunit (bridge B1b), connecting the 2 subunits; these bridges are implicated in subunit movement. Contacts the tRNAs in the A and P-sites. The protein is Small ribosomal subunit protein uS13 of Dehalococcoides mccartyi (strain ATCC BAA-2100 / JCM 16839 / KCTC 5957 / BAV1).